We begin with the raw amino-acid sequence, 476 residues long: Probable pectin lyase F (476 aa).

Residues 1 to 20 (MTLLRHLLTATALLGASVQA) form the signal peptide. A disulfide bond links Cys-84 and Cys-108. Asn-103 and Asn-131 each carry an N-linked (GlcNAc...) asparagine glycan. Arg-258 is a catalytic residue. Residues Asn-277 and Asn-318 are each glycosylated (N-linked (GlcNAc...) asparagine). A disulfide bridge connects residues Cys-325 and Cys-333. Asn-385 carries an N-linked (GlcNAc...) asparagine glycan. Positions 412–476 (FVPAYSEAGP…HHHQGHGRGY (65 aa)) are disordered. Polar residues predominate over residues 426 to 453 (VPTQPSWSWRTVTNGPAPTGAPSDSPSA). The span at 465–476 (NKHHHQGHGRGY) shows a compositional bias: basic residues.

It belongs to the polysaccharide lyase 1 family.

It is found in the secreted. The catalysed reaction is Eliminative cleavage of (1-&gt;4)-alpha-D-galacturonan methyl ester to give oligosaccharides with 4-deoxy-6-O-methyl-alpha-D-galact-4-enuronosyl groups at their non-reducing ends.. Its function is as follows. Pectinolytic enzymes consist of four classes of enzymes: pectin lyase, polygalacturonase, pectin methylesterase and rhamnogalacturonase. Among pectinolytic enzymes, pectin lyase is the most important in depolymerization of pectin, since it cleaves internal glycosidic bonds of highly methylated pectins. The protein is Probable pectin lyase F (pelF) of Aspergillus niger (strain ATCC MYA-4892 / CBS 513.88 / FGSC A1513).